The following is a 172-amino-acid chain: dCTP deaminase (172 aa).

DCTP-binding positions include 97 to 102 and D113; that span reads RSSFAR. The active-site Proton donor/acceptor is E123. The dCTP site is built by Y155 and Q162.

Belongs to the dCTP deaminase family. As to quaternary structure, homotrimer.

It catalyses the reaction dCTP + H2O + H(+) = dUTP + NH4(+). It participates in pyrimidine metabolism; dUMP biosynthesis; dUMP from dCTP (dUTP route): step 1/2. Its function is as follows. Catalyzes the deamination of dCTP to dUTP. The protein is dCTP deaminase of Metallosphaera sedula (strain ATCC 51363 / DSM 5348 / JCM 9185 / NBRC 15509 / TH2).